A 155-amino-acid polypeptide reads, in one-letter code: MAEKMNVESFNLDHTKVKAPFVRLAGTKVGVHGDEIYKYDVRFKQPNKEHMEMPALHSLEHLMAELARNHTDKLVDISPMGCQTGFYVSFINHSDYDDALEIIATTLTDVLVATEVPACNEVQCGWAASHSLEGAKALAEEFLAKRSEWKNVFGE.

Positions 57, 61, and 124 each coordinate Fe cation.

The protein belongs to the LuxS family. As to quaternary structure, homodimer. Requires Fe cation as cofactor.

The catalysed reaction is S-(5-deoxy-D-ribos-5-yl)-L-homocysteine = (S)-4,5-dihydroxypentane-2,3-dione + L-homocysteine. Involved in the synthesis of autoinducer 2 (AI-2) which is secreted by bacteria and is used to communicate both the cell density and the metabolic potential of the environment. The regulation of gene expression in response to changes in cell density is called quorum sensing. Catalyzes the transformation of S-ribosylhomocysteine (RHC) to homocysteine (HC) and 4,5-dihydroxy-2,3-pentadione (DPD). The sequence is that of S-ribosylhomocysteine lyase from Listeria monocytogenes serovar 1/2a (strain ATCC BAA-679 / EGD-e).